We begin with the raw amino-acid sequence, 120 residues long: Ribonuclease P protein component (120 aa).

It belongs to the RnpA family. Consists of a catalytic RNA component (M1 or rnpB) and a protein subunit.

The enzyme catalyses Endonucleolytic cleavage of RNA, removing 5'-extranucleotides from tRNA precursor.. Its function is as follows. RNaseP catalyzes the removal of the 5'-leader sequence from pre-tRNA to produce the mature 5'-terminus. It can also cleave other RNA substrates such as 4.5S RNA. The protein component plays an auxiliary but essential role in vivo by binding to the 5'-leader sequence and broadening the substrate specificity of the ribozyme. The protein is Ribonuclease P protein component of Desulfotalea psychrophila (strain LSv54 / DSM 12343).